The primary structure comprises 897 residues: Interleukin enhancer-binding factor 3-A (897 aa).

Residues 5–379 enclose the DZF domain; it reads RIFLNDDRHV…PLKRPIEEDG (375 aa). 3 disordered regions span residues 52–85, 364–403, and 466–502; these read QEKD…GENP, TTYA…PPQV, and MGLP…EVDS. Composition is skewed to basic and acidic residues over residues 72–81 and 373–384; these read EEGKDSEMKT and RPIEEDGDDKSP. The Bipartite nuclear localization signal motif lies at 372–390; the sequence is KRPIEEDGDDKSPSKKKKK. DRBM domains follow at residues 399 to 468 and 521 to 587; these read EPPQ…DMGL and HGKN…KLFP. Disordered stretches follow at residues 627–650 and 708–797; these read PPPQ…GRGG and GDSY…AQGA. Residues 637–650 show a composition bias toward gly residues; that stretch reads RGGMNRGRGRGRGG. The segment covering 714–747 has biased composition (pro residues); that stretch reads PTPPKPFVNKKPPPPQQQQQQQPPPQHASNPPKP. Positions 749 to 794 are enriched in low complexity; the sequence is YNQGYQGHQGGQQQQQQQQQQQTYNQNQYSNYGPPQKQKGGYNQGA.

As to quaternary structure, a component of a ybx2/frgy2-containing mRNA-ribonucleoprotein (mRNP) complex. Also a component of the CCAAT box transcription factor (CBTF) complex. In terms of processing, phosphorylated. Phosphorylation affects nuclear translocation. Methylated by protein arginine N-methyltransferase 1 (prmt1b) in the RGG-rich domain. Methylation decreases DNA-binding and thereby decreases transcription of the gata2 gene, but does not regulate dsRNA binding or subcellular localization. In terms of tissue distribution, expressed mainly in the ectoderm (at protein level).

The protein resides in the nucleus. Its subcellular location is the cytoplasm. Its function is as follows. RNA-binding protein that plays an essential role in the biogenesis of circular RNAs (circRNAs) which are produced by back-splicing circularization of pre-mRNAs. Within the nucleus, promotes circRNAs processing by stabilizing the regulatory elements residing in the flanking introns of the circularized exons. Plays thereby a role in the back-splicing of a subset of circRNAs. As a consequence, participates in a wide range of transcriptional and post-transcriptional processes. Binds to poly-U elements and AU-rich elements (AREs) in the 3'-UTR of target mRNAs. Upon viral infection, ILF3 accumulates in the cytoplasm and participates in the innate antiviral response. Mechanistically, ILF3 becomes phosphorylated and activated by the double-stranded RNA-activated protein kinase/PKR which releases ILF3 from cellular mature circRNAs. In turn, unbound ILF3 molecules are able to interact with and thus inhibit viral mRNAs. Has a cytoplasmic role early in development as part of a ribonucleoprotein (mRNP) complex which may regulate mRNA transport and/or translation. Following nuclear localization at the mid-blastula transition, acts as a transcription factor and binds the 5'-CCAAT-3' promoter sequence to regulate transcription of the gata2 gene as a subunit of the CCAAT box transcription factor (CBTF). Its role as an mRNP component negatively regulates its activity as a transcription factor by precluding its nuclear localization. The protein is Interleukin enhancer-binding factor 3-A (ilf3-a) of Xenopus laevis (African clawed frog).